A 275-amino-acid polypeptide reads, in one-letter code: Small ribosomal subunit protein uS3 (275 aa).

The KH type-2 domain occupies 39–107 (VRIYLKKKLK…PVHVNIEEIR (69 aa)). A disordered region spans residues 216–275 (AAATSAEPAAEEKKTRRAPSKTAARKPAAGTDKPLVAAKPAVKRVRKVETPAADTQKSGE).

Belongs to the universal ribosomal protein uS3 family. As to quaternary structure, part of the 30S ribosomal subunit. Forms a tight complex with proteins S10 and S14.

Binds the lower part of the 30S subunit head. Binds mRNA in the 70S ribosome, positioning it for translation. The sequence is that of Small ribosomal subunit protein uS3 from Polynucleobacter asymbioticus (strain DSM 18221 / CIP 109841 / QLW-P1DMWA-1) (Polynucleobacter necessarius subsp. asymbioticus).